The sequence spans 435 residues: Trigger factor (435 aa).

The region spanning 183–263 (GDFINVDVTI…VKTIWQGNMP (81 aa)) is the PPIase FKBP-type domain.

It belongs to the FKBP-type PPIase family. Tig subfamily.

It is found in the cytoplasm. It carries out the reaction [protein]-peptidylproline (omega=180) = [protein]-peptidylproline (omega=0). In terms of biological role, involved in protein export. Acts as a chaperone by maintaining the newly synthesized protein in an open conformation. Functions as a peptidyl-prolyl cis-trans isomerase. The sequence is that of Trigger factor from Protochlamydia amoebophila (strain UWE25).